Here is a 642-residue protein sequence, read N- to C-terminus: Threonine--tRNA ligase (642 aa).

The region spanning 1 to 61 (MPVITLPDGS…ENDATLAIIT (61 aa)) is the TGS domain. The catalytic stretch occupies residues 243 to 534 (DHRKIGKQLD…LTEEFAGFFP (292 aa)). Zn(2+) is bound by residues Cys334, His385, and His511.

It belongs to the class-II aminoacyl-tRNA synthetase family. Homodimer. It depends on Zn(2+) as a cofactor.

It localises to the cytoplasm. The enzyme catalyses tRNA(Thr) + L-threonine + ATP = L-threonyl-tRNA(Thr) + AMP + diphosphate + H(+). Catalyzes the attachment of threonine to tRNA(Thr) in a two-step reaction: L-threonine is first activated by ATP to form Thr-AMP and then transferred to the acceptor end of tRNA(Thr). Also edits incorrectly charged L-seryl-tRNA(Thr). The polypeptide is Threonine--tRNA ligase (Salmonella paratyphi C (strain RKS4594)).